Reading from the N-terminus, the 312-residue chain is Aspartate carbamoyltransferase catalytic subunit (312 aa).

Residues R58 and T59 each coordinate carbamoyl phosphate. K86 contacts L-aspartate. 3 residues coordinate carbamoyl phosphate: R108, H136, and Q139. 2 residues coordinate L-aspartate: R169 and R223. G264 and P265 together coordinate carbamoyl phosphate.

Belongs to the aspartate/ornithine carbamoyltransferase superfamily. ATCase family. In terms of assembly, heterododecamer (2C3:3R2) of six catalytic PyrB chains organized as two trimers (C3), and six regulatory PyrI chains organized as three dimers (R2).

It catalyses the reaction carbamoyl phosphate + L-aspartate = N-carbamoyl-L-aspartate + phosphate + H(+). Its pathway is pyrimidine metabolism; UMP biosynthesis via de novo pathway; (S)-dihydroorotate from bicarbonate: step 2/3. Catalyzes the condensation of carbamoyl phosphate and aspartate to form carbamoyl aspartate and inorganic phosphate, the committed step in the de novo pyrimidine nucleotide biosynthesis pathway. This chain is Aspartate carbamoyltransferase catalytic subunit, found in Desulforamulus reducens (strain ATCC BAA-1160 / DSM 100696 / MI-1) (Desulfotomaculum reducens).